Reading from the N-terminus, the 464-residue chain is 3-isopropylmalate dehydratase large subunit (464 aa).

Cys-337, Cys-397, and Cys-400 together coordinate [4Fe-4S] cluster.

It belongs to the aconitase/IPM isomerase family. LeuC type 1 subfamily. In terms of assembly, heterodimer of LeuC and LeuD. Requires [4Fe-4S] cluster as cofactor.

The catalysed reaction is (2R,3S)-3-isopropylmalate = (2S)-2-isopropylmalate. It participates in amino-acid biosynthesis; L-leucine biosynthesis; L-leucine from 3-methyl-2-oxobutanoate: step 2/4. Catalyzes the isomerization between 2-isopropylmalate and 3-isopropylmalate, via the formation of 2-isopropylmaleate. The chain is 3-isopropylmalate dehydratase large subunit from Bacillus cereus (strain AH187).